Consider the following 140-residue polypeptide: Nucleoside diphosphate kinase (140 aa).

ATP-binding residues include Lys11, Phe59, Arg87, Thr93, Arg104, and Asn114. Catalysis depends on His117, which acts as the Pros-phosphohistidine intermediate.

The protein belongs to the NDK family. Homotetramer. Mg(2+) is required as a cofactor.

The protein localises to the cytoplasm. The catalysed reaction is a 2'-deoxyribonucleoside 5'-diphosphate + ATP = a 2'-deoxyribonucleoside 5'-triphosphate + ADP. It carries out the reaction a ribonucleoside 5'-diphosphate + ATP = a ribonucleoside 5'-triphosphate + ADP. Major role in the synthesis of nucleoside triphosphates other than ATP. The ATP gamma phosphate is transferred to the NDP beta phosphate via a ping-pong mechanism, using a phosphorylated active-site intermediate. The polypeptide is Nucleoside diphosphate kinase (Bradyrhizobium sp. (strain ORS 278)).